Consider the following 115-residue polypeptide: MARVKRGNIARKRRNKILRLARGFRGSNGSLFRTANQRVMKALCNAYRDRRRRKRDFRRLWIARINAASRLNGLSYSRLVGSLKKANIKLNRKMLALLALADPTSFANVVVVAKS.

It belongs to the bacterial ribosomal protein bL20 family.

The protein resides in the plastid. It is found in the organellar chromatophore. In terms of biological role, binds directly to 23S ribosomal RNA and is necessary for the in vitro assembly process of the 50S ribosomal subunit. It is not involved in the protein synthesizing functions of that subunit. The chain is Large ribosomal subunit protein bL20c from Paulinella chromatophora.